Reading from the N-terminus, the 131-residue chain is Small ribosomal subunit protein uS8 (131 aa).

It belongs to the universal ribosomal protein uS8 family. Part of the 30S ribosomal subunit. Contacts proteins S5 and S12.

In terms of biological role, one of the primary rRNA binding proteins, it binds directly to 16S rRNA central domain where it helps coordinate assembly of the platform of the 30S subunit. The chain is Small ribosomal subunit protein uS8 from Phocaeicola vulgatus (strain ATCC 8482 / DSM 1447 / JCM 5826 / CCUG 4940 / NBRC 14291 / NCTC 11154) (Bacteroides vulgatus).